The chain runs to 230 residues: Ribonuclease 3 (230 aa).

The RNase III domain occupies Ile8–Asn135. Residue Glu48 participates in Mg(2+) binding. Asp52 is an active-site residue. The Mg(2+) site is built by Asp121 and Glu124. Glu124 is a catalytic residue. The 70-residue stretch at Asp161 to Lys230 folds into the DRBM domain.

It belongs to the ribonuclease III family. As to quaternary structure, homodimer. It depends on Mg(2+) as a cofactor.

The protein localises to the cytoplasm. The enzyme catalyses Endonucleolytic cleavage to 5'-phosphomonoester.. Functionally, digests double-stranded RNA. Involved in the processing of primary rRNA transcript to yield the immediate precursors to the large and small rRNAs (23S and 16S). Processes some mRNAs, and tRNAs when they are encoded in the rRNA operon. Processes pre-crRNA and tracrRNA of type II CRISPR loci if present in the organism. This is Ribonuclease 3 from Natranaerobius thermophilus (strain ATCC BAA-1301 / DSM 18059 / JW/NM-WN-LF).